Here is a 353-residue protein sequence, read N- to C-terminus: Outer membrane protein A (353 aa).

The first 21 residues, 1–21, serve as a signal peptide directing secretion; that stretch reads MKKTAIALAVALVGFATVAQA. The next 8 membrane-spanning stretches (beta stranded) occupy residues 27-37, 56-67, 71-79, 97-108, 113-121, 148-157, 162-169, and 188-196; these read TWYTGGKLGWS, QLGAGAFFGYQA, LGFEMGYDW, QGVQLAAKLSYP, LDVYTRLGG, PLVALGAEYA, WATRMEYQ, and LLSVGVSYR. 4 repeat units span residues 208-209, 210-211, 212-213, and 214-215. The tract at residues 208-215 is 4 X 2 AA approximate tandem repeats of A-P; the sequence is APTPAPAP. Residues 217-345 enclose the OmpA-like domain; the sequence is VDTKRFTLKS…RVEIEVKGYK (129 aa). Cysteine 318 and cysteine 330 are disulfide-bonded.

This sequence belongs to the outer membrane OOP (TC 1.B.6) superfamily. OmpA family. In terms of assembly, monomer and homodimer.

Its subcellular location is the cell outer membrane. Functionally, with TolR probably plays a role in maintaining the position of the peptidoglycan cell wall in the periplasm. Acts as a porin with low permeability that allows slow penetration of small solutes; an internal gate slows down solute passage. The protein is Outer membrane protein A of Yersinia pseudotuberculosis serotype I (strain IP32953).